A 1031-amino-acid polypeptide reads, in one-letter code: Error-prone DNA polymerase (1031 aa).

This sequence belongs to the DNA polymerase type-C family. DnaE2 subfamily.

The protein resides in the cytoplasm. The enzyme catalyses DNA(n) + a 2'-deoxyribonucleoside 5'-triphosphate = DNA(n+1) + diphosphate. DNA polymerase involved in damage-induced mutagenesis and translesion synthesis (TLS). It is not the major replicative DNA polymerase. The polypeptide is Error-prone DNA polymerase (Pseudomonas aeruginosa (strain ATCC 15692 / DSM 22644 / CIP 104116 / JCM 14847 / LMG 12228 / 1C / PRS 101 / PAO1)).